We begin with the raw amino-acid sequence, 723 residues long: Protein Aster-A (723 aa).

Over residues 1–18 the composition is skewed to low complexity; sequence MFDTTPHSGRSSPSSSPS. The segment at 1 to 63 is disordered; sequence MFDTTPHSGR…SGVSGTLSTQ (63 aa). Residues 28 to 38 show a composition bias toward pro residues; the sequence is PSRPPSAPEPE. The 68-residue stretch at 93–160 folds into the GRAM domain; sequence EDFRKLFSKL…KEVTCLKKEK (68 aa). The disordered stretch occupies residues 257–337; that stretch reads SPSGAADRSQ…DGPTSNLGPL (81 aa). Ser-265, Ser-269, and Ser-273 each carry phosphoserine. The span at 302–314 shows a compositional bias: polar residues; that stretch reads DSQLDASSSQTVT. One can recognise a VASt domain in the interval 370–541; it reads SGRLLINSVF…ELAKAEKVSL (172 aa). Position 418 is a phosphoserine (Ser-418). Positions 562-601 are disordered; sequence LSWRGHRDGPQHPDPDPCTQTSMHTSGSLSSRFSEPSVDQ. The span at 566 to 576 shows a compositional bias: basic and acidic residues; that stretch reads GHRDGPQHPDP. Residues 579 to 595 are compositionally biased toward polar residues; it reads CTQTSMHTSGSLSSRFS. The helical transmembrane segment at 610–630 threads the bilayer; the sequence is ALVLISIVLIVLIALNALLFY.

Its subcellular location is the endoplasmic reticulum membrane. It localises to the cell membrane. The protein resides in the cytoplasmic vesicle. It is found in the autophagosome. In terms of biological role, cholesterol transporter that mediates non-vesicular transport of cholesterol from the plasma membrane (PM) to the endoplasmic reticulum (ER). Contains unique domains for binding cholesterol and the PM, thereby serving as a molecular bridge for the transfer of cholesterol from the PM to the ER. Plays a crucial role in cholesterol homeostasis and has the unique ability to localize to the PM based on the level of membrane cholesterol. In lipid-poor conditions localizes to the ER membrane and in response to excess cholesterol in the PM is recruited to the endoplasmic reticulum-plasma membrane contact sites (EPCS) which is mediated by the GRAM domain. At the EPCS, the sterol-binding VASt/ASTER domain binds to the cholesterol in the PM and facilitates its transfer from the PM to ER. May play a role in tumor progression. Plays a role in autophagy regulation and is required for biogenesis of the autophagosome. This function in autophagy requires its cholesterol-transfer activity. In Rattus norvegicus (Rat), this protein is Protein Aster-A.